The sequence spans 358 residues: Peptide chain release factor 1 (358 aa).

Residue Q233 is modified to N5-methylglutamine.

This sequence belongs to the prokaryotic/mitochondrial release factor family. Methylated by PrmC. Methylation increases the termination efficiency of RF1.

The protein resides in the cytoplasm. Peptide chain release factor 1 directs the termination of translation in response to the peptide chain termination codons UAG and UAA. The polypeptide is Peptide chain release factor 1 (Listeria monocytogenes serotype 4b (strain CLIP80459)).